Consider the following 517-residue polypeptide: Cytochrome P450 monooxygenase ausI (517 aa).

The chain crosses the membrane as a helical span at residues 8–28; sequence LAPLGQPWIAGLVVVSAVLYL. C457 lines the heme pocket.

It belongs to the cytochrome P450 family. The cofactor is heme.

Its subcellular location is the membrane. Its pathway is secondary metabolite biosynthesis; terpenoid biosynthesis. Functionally, cytochrome P450 monooxygenase; part of the gene cluster that mediates the biosynthesis of calidodehydroaustin, a fungal meroterpenoid. The first step of the pathway is the synthesis of 3,5-dimethylorsellinic acid by the polyketide synthase ausA. 3,5-dimethylorsellinic acid is then prenylated by the polyprenyl transferase ausN. Further epoxidation by the FAD-dependent monooxygenase ausM and cyclization by the probable terpene cyclase ausL lead to the formation of protoaustinoid A. Protoaustinoid A is then oxidized to spiro-lactone preaustinoid A3 by the combined action of the FAD-binding monooxygenases ausB and ausC, and the dioxygenase ausE. Acid-catalyzed keto-rearrangement and ring contraction of the tetraketide portion of preaustinoid A3 by ausJ lead to the formation of preaustinoid A4. The aldo-keto reductase ausK, with the help of ausH, is involved in the next step by transforming preaustinoid A4 into isoaustinone which is in turn hydroxylated by the P450 monooxygenase ausI to form austinolide. The cytochrome P450 monooxygenase ausG modifies austinolide to austinol. Austinol is further acetylated to austin by the O-acetyltransferase ausP, which spontaneously changes to dehydroaustin. The cytochrome P450 monooxygenase ausR then converts dehydroaustin is into 7-dehydrodehydroaustin. The hydroxylation catalyzed by ausR permits the O-acetyltransferase ausQ to add an additional acetyl group to the molecule, leading to the formation of acetoxydehydroaustin. The short chain dehydrogenase ausT catalyzes the reduction of the double bond present between carbon atoms 1 and 2 to convert 7-dehydrodehydroaustin into 1,2-dihydro-7-hydroxydehydroaustin. AusQ catalyzes not only an acetylation reaction but also the addition of the PKS ausV diketide product to 1,2-dihydro-7-hydroxydehydroaustin, forming precalidodehydroaustin. Finally, the iron/alpha-ketoglutarate-dependent dioxygenase converts precalidodehydroaustin into calidodehydroaustin. In Aspergillus calidoustus, this protein is Cytochrome P450 monooxygenase ausI.